The sequence spans 238 residues: tRNA (guanine-N(7)-)-methyltransferase (238 aa).

Residues Glu-68, Glu-93, Asp-120, and Asp-143 each coordinate S-adenosyl-L-methionine. The active site involves Asp-143. Residues Lys-147, Asp-179, and Thr-216–Glu-219 contribute to the substrate site.

This sequence belongs to the class I-like SAM-binding methyltransferase superfamily. TrmB family.

It carries out the reaction guanosine(46) in tRNA + S-adenosyl-L-methionine = N(7)-methylguanosine(46) in tRNA + S-adenosyl-L-homocysteine. It participates in tRNA modification; N(7)-methylguanine-tRNA biosynthesis. Its function is as follows. Catalyzes the formation of N(7)-methylguanine at position 46 (m7G46) in tRNA. The polypeptide is tRNA (guanine-N(7)-)-methyltransferase (Aliivibrio salmonicida (strain LFI1238) (Vibrio salmonicida (strain LFI1238))).